The chain runs to 475 residues: Ribulose bisphosphate carboxylase large chain (475 aa).

A propeptide spanning residues 1–2 is cleaved from the precursor; the sequence is MS. N-acetylproline is present on proline 3. Lysine 14 carries the post-translational modification N6,N6,N6-trimethyllysine. Substrate is bound by residues asparagine 123 and threonine 173. Residue lysine 175 is the Proton acceptor of the active site. Lysine 177 contacts substrate. Lysine 201, aspartate 203, and glutamate 204 together coordinate Mg(2+). Lysine 201 carries the post-translational modification N6-carboxylysine. Histidine 294 (proton acceptor) is an active-site residue. Positions 295, 327, and 379 each coordinate substrate.

It belongs to the RuBisCO large chain family. Type I subfamily. In terms of assembly, heterohexadecamer of 8 large chains and 8 small chains; disulfide-linked. The disulfide link is formed within the large subunit homodimers. Requires Mg(2+) as cofactor. The disulfide bond which can form in the large chain dimeric partners within the hexadecamer appears to be associated with oxidative stress and protein turnover.

Its subcellular location is the plastid. It is found in the chloroplast. It carries out the reaction 2 (2R)-3-phosphoglycerate + 2 H(+) = D-ribulose 1,5-bisphosphate + CO2 + H2O. The catalysed reaction is D-ribulose 1,5-bisphosphate + O2 = 2-phosphoglycolate + (2R)-3-phosphoglycerate + 2 H(+). Functionally, ruBisCO catalyzes two reactions: the carboxylation of D-ribulose 1,5-bisphosphate, the primary event in carbon dioxide fixation, as well as the oxidative fragmentation of the pentose substrate in the photorespiration process. Both reactions occur simultaneously and in competition at the same active site. The chain is Ribulose bisphosphate carboxylase large chain from Pelargonium hortorum (Common geranium).